The chain runs to 87 residues: Conotoxin Cl12.3 (87 aa).

The signal sequence occupies residues 1 to 19 (MKLTCVLVVLLLFLPYGDL). A propeptide spanning residues 20–42 (ITNNYIGGAARKVTPWRRNLKTR) is cleaved from the precursor.

The protein belongs to the conotoxin O1 superfamily. In terms of processing, contains 4 disulfide bonds. Expressed by the venom duct.

Its subcellular location is the secreted. The sequence is that of Conotoxin Cl12.3 from Californiconus californicus (California cone).